Here is a 178-residue protein sequence, read N- to C-terminus: ATP synthase subunit delta (178 aa).

The protein belongs to the ATPase delta chain family. In terms of assembly, F-type ATPases have 2 components, F(1) - the catalytic core - and F(0) - the membrane proton channel. F(1) has five subunits: alpha(3), beta(3), gamma(1), delta(1), epsilon(1). F(0) has three main subunits: a(1), b(2) and c(10-14). The alpha and beta chains form an alternating ring which encloses part of the gamma chain. F(1) is attached to F(0) by a central stalk formed by the gamma and epsilon chains, while a peripheral stalk is formed by the delta and b chains.

The protein resides in the cell membrane. In terms of biological role, f(1)F(0) ATP synthase produces ATP from ADP in the presence of a proton or sodium gradient. F-type ATPases consist of two structural domains, F(1) containing the extramembraneous catalytic core and F(0) containing the membrane proton channel, linked together by a central stalk and a peripheral stalk. During catalysis, ATP synthesis in the catalytic domain of F(1) is coupled via a rotary mechanism of the central stalk subunits to proton translocation. This protein is part of the stalk that links CF(0) to CF(1). It either transmits conformational changes from CF(0) to CF(1) or is implicated in proton conduction. The sequence is that of ATP synthase subunit delta from Streptococcus agalactiae serotype V (strain ATCC BAA-611 / 2603 V/R).